Consider the following 1586-residue polypeptide: COP1-interactive protein 1 (1586 aa).

The region spanning 10 to 84 is the NAB domain; sequence LKSFFEPHFD…RQYDDLTGEI (75 aa). Residues 88 to 119 are disordered; that stretch reads VNGKGESSSSSSSDSDSDHSSKRKVKRNGNGK. Coiled-coil stretches lie at residues 128 to 411, 437 to 1196, 1225 to 1336, and 1372 to 1406; these read TGAL…LKES, ASEL…LKEE, LETL…TEAT, and MESLRNELEMKGDEIETLMEKISNIEVKLRLSNQK. 5 LRR repeats span residues 173–187, 188–210, 216–239, 261–285, and 287–309; these read SEEISSKLKLETEKL, EDEKSIALSDNRELHQKLEVAGK, NQKLEDIKKERDELQTERDNGIKR, TSNLKQQLEASEQRVSELTSGMNSA, and EENKSLSLKVSEISDVIQQGQTT. Over residues 249 to 262 the composition is skewed to basic and acidic residues; sequence DWKTTSDQLKDETS. The segment at 249–286 is disordered; sequence DWKTTSDQLKDETSNLKQQLEASEQRVSELTSGMNSAE. The disordered stretch occupies residues 325-353; it reads KEKESEHSSLVELHKTHERESSSQVKELE. LRR repeat units lie at residues 384 to 410, 437 to 461, 473 to 498, 560 to 586, 613 to 637, 649 to 674, 768 to 792, 824 to 850, 856 to 880, 902 to 929, 944 to 968, 990 to 1014, 1077 to 1101, 1120 to 1144, 1195 to 1220, 1247 to 1272, 1372 to 1396, 1398 to 1417, 1426 to 1448, and 1450 to 1474; these read IAELSNEIQEAQNTMQELMSESGQLKE, ASELEAQLESSKQQVSDLSASLKAA, VETMNKLEQTQNTIQELMAELGKLKD, IAELSNEIKEAQNTIQELVSESGQLKE, VSELEAQLESSEQRISDLTVDLKDA, LEIMDKLEQAQNTIKELMDELGELKD, LSELETQLKLLEQRVVDLSASLNAA, LAESKDTLTQKENELSSFVEVHEAHKR, VKELEARVESAEEQVKELNQNLNSS, ESTIQELSSESERLKGSHAEKDNELFSL, LRGLEAQLESSEHRVLELSESLKAA, QIMVQELTADSSKLKEQLAEKESKL, ISELEKTMEERGTELSALTQKLEDN, RAELDSMSVQKEEVEKQMVCKSEEA, EEIINKVKVHESILEEINGLSEKIKG, VQMHDKINVASSEIMALTELINNLKN, MESLRNELEMKGDEIETLMEKISNI, VKLRLSNQKLRVTEQVLTEK, AKHLEEQALLEKNLTMTHETYRG, and IKEIADKVNITVDGFQSMSEKLTEK. Residues 430–456 form a disordered region; sequence QRDSSTRASELEAQLESSKQQVSDLSA. Polar residues predominate over residues 444–455; the sequence is LESSKQQVSDLS. A disordered region spans residues 965–985; that stretch reads LKAAEEESRTMSTKISETSDE. Positions 1496–1530 form a coiled coil; it reads VIERNHEKEKMNKEIEKKDEEIKKLGGKVREDEKE.

As to quaternary structure, interacts with COP1 coiled-coil region. Mainly expressed in photosynthetic and vascular tissues. Accumulates in both dark-grown and light-grown seedlings roots and shoots, leaves and flowers (at protein level).

The protein resides in the cell membrane. Its subcellular location is the cytoplasm. The protein localises to the cytoskeleton. In terms of biological role, positive regulator of abscisic acid (ABA)-mediated signaling pathways involved in abiotic stress responses (e.g. osmotic stress) and leading to various plant adaptation (e.g. stomata closure). This Arabidopsis thaliana (Mouse-ear cress) protein is COP1-interactive protein 1.